The following is a 331-amino-acid chain: Flotillin-like protein FloA (331 aa).

The next 2 membrane-spanning stretches (helical) occupy residues 6 to 26 (LMILAIVAVAIIVLAVFFTFV) and 28 to 48 (VMLWISALAAGVKISIFTLVG). Residues 236-331 (QTDQAEADKN…KDPSDEDRKS (96 aa)) form a required for correct localization region. 4 consecutive short sequence motifs (EA repeat) follow at residues 240–242 (AEA), 251–253 (AEE), 278–282 (EAEAE), and 288–290 (AEA). Positions 312–331 (EMRDSFGKLTKDPSDEDRKS) are disordered.

This sequence belongs to the flotillin-like FloA family. In terms of assembly, homooligomerizes. Interacts with FloT. Interacts with FtsH midcell. Interacts with PhoR, colocalizes with PhoR in FloA-only membrane rafts.

The protein localises to the cell membrane. It is found in the membrane raft. Functionally, found in functional membrane microdomains (FMM) that may be equivalent to eukaryotic membrane rafts. FMMs are highly dynamic and increase in number as cells age. FloA and FloT function is partially redundant; double deletions have marked synthetic phenotypes. Flotillins are thought to be important factors in membrane fluidity, especially during periods of rapid growth in rich media. Whether specific proteins are associated with FMMs is controversial; in one study FloT rafts have been shown to include proteins involved in adaptation to stationary phase, while FloA-FloT rafts include proteins involved in differentiation including sporulation, biofilm formation and DNA uptake competence. Another (more finely resolved) study only showed association of NfeD2 with FloT rafts of all the proteins examined. Involved in spatial organization of membranes, perhaps recruiting proteins to specific membrane regions. Simultaneous overexpression of both FloA and FloT leads to defects in cell division and differentiation, in part caused by stabilization of FtsH and its subsequent increased ability to degrade proteins. Cells make more biofilm, are about half as long, have less EzrA and more frequent Z-rings. This chain is Flotillin-like protein FloA, found in Bacillus subtilis (strain 168).